Consider the following 172-residue polypeptide: S-ribosylhomocysteine lyase (172 aa).

Residues His-54, His-58, and Cys-128 each coordinate Fe cation.

The protein belongs to the LuxS family. In terms of assembly, homodimer. It depends on Fe cation as a cofactor.

The catalysed reaction is S-(5-deoxy-D-ribos-5-yl)-L-homocysteine = (S)-4,5-dihydroxypentane-2,3-dione + L-homocysteine. In terms of biological role, involved in the synthesis of autoinducer 2 (AI-2) which is secreted by bacteria and is used to communicate both the cell density and the metabolic potential of the environment. The regulation of gene expression in response to changes in cell density is called quorum sensing. Catalyzes the transformation of S-ribosylhomocysteine (RHC) to homocysteine (HC) and 4,5-dihydroxy-2,3-pentadione (DPD). This Vibrio parahaemolyticus serotype O3:K6 (strain RIMD 2210633) protein is S-ribosylhomocysteine lyase.